Reading from the N-terminus, the 103-residue chain is MIFRRQLSTLIPPKVASPATLHGAPNAKRMADVVSFYKALPQGAAPALPKTANPFKLYYRKYFHPKSGKASGAPLLHLILGIFLFGYISDYQFHLKHHKNGAH.

The transit peptide at 1–6 (MIFRRQ) directs the protein to the mitochondrion.

In terms of assembly, F-type ATP synthases have 2 components, the catalytic core F(1) and the membrane-embedded component F(0), linked together by a central stalk and a peripheral stalk. The central stalk, also called rotor shaft, is often seen as part of F(1). The peripheral stalk is seen as part of F(0). F(0) contains the membrane channel next to the rotor. F-type ATP synthases form dimers but each monomer functions independently in ATP generation. The dimer consists of 17 different polypeptides: ATP1 (subunit alpha, 3 molecules per monomer, part of F(1)), ATP2 (subunit beta, 3 copies per monomer, part of F(1)), ATP3 (subunit gamma, part of the central stalk), ATP4 (subunit b, part of the peripheral stalk), ATP5/OSCP (subunit 5/OSCP, part of the peripheral stalk), ATP6 (subunit a, part of the peripheral stalk), ATP7 (subunit d, part of the peripheral stalk), ATP8 (subunit 8, part of the peripheral stalk), OLI1 (subunit c, part of the rotor, 10 molecules per monomer), ATP14 (subunit h, part of the peripheral stalk), ATP15 (subunit epsilon, part of the central stalk), ATP16 (subunit delta, part of the central stalk), ATP17 (subunit f, part of the peripheral stalk), ATP18 (subunit i/j, part of the peripheral stalk), ATP19 (subunit k, dimer-specific, at interface between monomers), ATP20 (subunit g, at interface between monomers), TIM11 (subunit e, at interface between monomers).

It is found in the mitochondrion inner membrane. Mitochondrial membrane ATP synthase (F(1)F(0) ATP synthase or Complex V) produces ATP from ADP in the presence of a proton gradient across the membrane which is generated by electron transport complexes of the respiratory chain. F-type ATP synthases consist of two structural domains, F(1) - containing the extramembraneous catalytic core, and F(0) - containing the membrane proton channel, linked together by a central stalk and a peripheral stalk. During catalysis, ATP synthesis in the catalytic domain of F(1) is coupled via a rotary mechanism of the central stalk subunits to proton translocation. Part of the complex F(0) domain. Minor subunit located with subunit a/ATP6 in the membrane. This chain is ATP synthase subunit f, mitochondrial, found in Yarrowia lipolytica (strain CLIB 122 / E 150) (Yeast).